The chain runs to 531 residues: Endoglucanase 7 (531 aa).

Residues 1–27 (MRGRALVLVAALLLQLLLLAAAGGAGA) form the signal peptide. The Nucleophile role is filled by Asp89. Residues His430, Asp482, and Glu491 contribute to the active site.

It belongs to the glycosyl hydrolase 9 (cellulase E) family. As to expression, ubiquitous.

The protein resides in the secreted. The catalysed reaction is Endohydrolysis of (1-&gt;4)-beta-D-glucosidic linkages in cellulose, lichenin and cereal beta-D-glucans.. This chain is Endoglucanase 7 (GLU10), found in Oryza sativa subsp. japonica (Rice).